The sequence spans 336 residues: Protein-glutamate methylesterase/protein-glutamine glutaminase 1 (336 aa).

One can recognise a Response regulatory domain in the interval 2 to 119 (KIAIVNDMPM…GNAQEAAAPL (118 aa)). Residue Asp-53 is modified to 4-aspartylphosphate. Residues 143 to 336 (PLRSGAPRQS…APRLLEIFAK (194 aa)) form the CheB-type methylesterase domain. Catalysis depends on residues Ser-159, His-186, and Asp-279.

The protein belongs to the CheB family. Post-translationally, phosphorylated by CheA. Phosphorylation of the N-terminal regulatory domain activates the methylesterase activity.

It localises to the cytoplasm. It carries out the reaction [protein]-L-glutamate 5-O-methyl ester + H2O = L-glutamyl-[protein] + methanol + H(+). The enzyme catalyses L-glutaminyl-[protein] + H2O = L-glutamyl-[protein] + NH4(+). Involved in chemotaxis. Part of a chemotaxis signal transduction system that modulates chemotaxis in response to various stimuli. Catalyzes the demethylation of specific methylglutamate residues introduced into the chemoreceptors (methyl-accepting chemotaxis proteins or MCP) by CheR. Also mediates the irreversible deamidation of specific glutamine residues to glutamic acid. The sequence is that of Protein-glutamate methylesterase/protein-glutamine glutaminase 1 from Pseudomonas fluorescens (strain ATCC BAA-477 / NRRL B-23932 / Pf-5).